A 155-amino-acid chain; its full sequence is MRLRLIAVGSRMPKWVEEGWHEYAKRLPAELSLELVEIPLNTRGKNADVARLIRQEGEAMLSKVQPGERIVTLEVHGKPWSTEQLATELDRWRLDARTVNLMVGGPEGLAPEVCARAEQRWSLSPLTLPHPLVRILIGEQIYRAWTVLSGHPYHK.

Residues L73, G104, and 123-128 (LSPLTL) each bind S-adenosyl-L-methionine.

This sequence belongs to the RNA methyltransferase RlmH family. As to quaternary structure, homodimer.

The protein resides in the cytoplasm. The catalysed reaction is pseudouridine(1915) in 23S rRNA + S-adenosyl-L-methionine = N(3)-methylpseudouridine(1915) in 23S rRNA + S-adenosyl-L-homocysteine + H(+). Specifically methylates the pseudouridine at position 1915 (m3Psi1915) in 23S rRNA. This is Ribosomal RNA large subunit methyltransferase H from Pseudomonas putida (strain ATCC 700007 / DSM 6899 / JCM 31910 / BCRC 17059 / LMG 24140 / F1).